A 423-amino-acid polypeptide reads, in one-letter code: Mitogen-activated protein kinase 9 (423 aa).

The Protein kinase domain occupies 26–321; it reads YQQLKPIGSG…VDEALRHPYI (296 aa). Residues 32–40 and lysine 55 contribute to the ATP site; that span reads IGSGAQGIV. Aspartate 151 functions as the Proton acceptor in the catalytic mechanism. A Phosphothreonine; by MAP2K7 modification is found at threonine 183. The short motif at 183–185 is the TXY element; it reads TPY. Residue tyrosine 185 is modified to Phosphotyrosine; by MAP2K4. The segment covering 366 to 375 has biased composition (basic and acidic residues); sequence RSKNGVKDQP. The interval 366-423 is disordered; the sequence is RSKNGVKDQPSDAAVSSKATPSQSSSINDISSMSTEHTLASDTDSSLDASTGPLEGCR. A compositionally biased stretch (low complexity) spans 387–416; that stretch reads SQSSSINDISSMSTEHTLASDTDSSLDAST.

This sequence belongs to the protein kinase superfamily. CMGC Ser/Thr protein kinase family. MAP kinase subfamily. Interacts with MECOM. Binds to at least four scaffolding proteins, MAPK8IP1/JIP-1, MAPK8IP2/JIP-2, MAPK8IP3/JIP-3/JSAP1 and SPAG9/MAPK8IP4/JIP-4. These proteins also bind other components of the JNK signaling pathway. Interacts with NFATC4. Interacts with ATF7; the interaction does not phosphorylate ATF7 but acts as a docking site for ATF7-associated partners such as JUN. Interacts with BCL10. Interacts with CTNNB1 and GSK3B. Interacts with DCLK2. Interacts with MAPKBP1. Interacts with POU5F1; phosphorylates POU5F1 at 'Ser-347'. Found in a complex with SH3RF1, RAC2, MAP3K7/TAK1, MAP2K7/MKK7, MAPK8IP1/JIP1 and MAPK8/JNK1. Requires Mg(2+) as cofactor. In terms of processing, dually phosphorylated on Thr-183 and Tyr-185 by MAP2K7 and MAP2K4, which activates the enzyme. Autophosphorylated in vitro.

The protein resides in the cytoplasm. It localises to the nucleus. It carries out the reaction L-seryl-[protein] + ATP = O-phospho-L-seryl-[protein] + ADP + H(+). It catalyses the reaction L-threonyl-[protein] + ATP = O-phospho-L-threonyl-[protein] + ADP + H(+). With respect to regulation, activated by threonine and tyrosine phosphorylation by either of two dual specificity kinases, MAP2K4 and MAP2K7. MAP2K4 shows a strong preference for Tyr-185 while MAP2K7 phosphorylates Tyr-183 preferentially. Inhibited by dual specificity phosphatases, such as DUSP1. Its function is as follows. Serine/threonine-protein kinase involved in various processes such as cell proliferation, differentiation, migration, transformation and programmed cell death. Extracellular stimuli such as pro-inflammatory cytokines or physical stress stimulate the stress-activated protein kinase/c-Jun N-terminal kinase (SAP/JNK) signaling pathway. In this cascade, two dual specificity kinases MAP2K4/MKK4 and MAP2K7/MKK7 phosphorylate and activate MAPK9/JNK2. In turn, MAPK9/JNK2 phosphorylates a number of transcription factors, primarily components of AP-1 such as JUN and ATF2 and thus regulates AP-1 transcriptional activity. In response to oxidative or ribotoxic stresses, inhibits rRNA synthesis by phosphorylating and inactivating the RNA polymerase 1-specific transcription initiation factor RRN3. Promotes stressed cell apoptosis by phosphorylating key regulatory factors including TP53 and YAP1. In T-cells, MAPK8 and MAPK9 are required for polarized differentiation of T-helper cells into Th1 cells. Upon T-cell receptor (TCR) stimulation, is activated by CARMA1, BCL10, MAP2K7 and MAP3K7/TAK1 to regulate JUN protein levels. Plays an important role in the osmotic stress-induced epithelial tight-junctions disruption. When activated, promotes beta-catenin/CTNNB1 degradation and inhibits the canonical Wnt signaling pathway. Also participates in neurite growth in spiral ganglion neurons. Phosphorylates the CLOCK-BMAL1 heterodimer and plays a role in the regulation of the circadian clock. Phosphorylates POU5F1, which results in the inhibition of POU5F1's transcriptional activity and enhances its proteasomal degradation. Phosphorylates ALKBH5 in response to reactive oxygen species (ROS), promoting ALKBH5 sumoylation and inactivation. The sequence is that of Mitogen-activated protein kinase 9 (Mapk9) from Rattus norvegicus (Rat).